We begin with the raw amino-acid sequence, 327 residues long: Phenylalanine--tRNA ligase alpha subunit (327 aa).

Glutamate 252 contributes to the Mg(2+) binding site.

It belongs to the class-II aminoacyl-tRNA synthetase family. Phe-tRNA synthetase alpha subunit type 1 subfamily. In terms of assembly, tetramer of two alpha and two beta subunits. It depends on Mg(2+) as a cofactor.

Its subcellular location is the cytoplasm. It carries out the reaction tRNA(Phe) + L-phenylalanine + ATP = L-phenylalanyl-tRNA(Phe) + AMP + diphosphate + H(+). This Photorhabdus laumondii subsp. laumondii (strain DSM 15139 / CIP 105565 / TT01) (Photorhabdus luminescens subsp. laumondii) protein is Phenylalanine--tRNA ligase alpha subunit.